The primary structure comprises 236 residues: MTKRYWNIILEEMMEAGVHFGHGTRKWNPKMSPYISAKRKGIHITNLIRTARFLSEACDLVFDAASEGKQFLIVGTKKKAADSVARAAIRARCHYVNKKWLGGMLTNWYTTETRLQKFRDLRMQQKTGRLNSFPKRDAAILKRHLAHLETYLGGIKYMTGLPDIVIIVDQQEEYTALRECITLEIPTICLIDTNCDPDLADISIPANDDAIASIRLILNKLVFAICEGRSSYIRNS.

It belongs to the universal ribosomal protein uS2 family.

It localises to the plastid. The protein localises to the chloroplast. This Glycine max (Soybean) protein is Small ribosomal subunit protein uS2c (rps2).